A 436-amino-acid polypeptide reads, in one-letter code: Probable G-protein coupled receptor C06G4.5 (436 aa).

At 1-53 (MSTNLVDYVDDSYLNQSMNSENGLDSVTQIMYDMKKYNIVNDVLPPPNHEDLH) the chain is on the extracellular side. A glycan (N-linked (GlcNAc...) asparagine) is linked at N15. A helical membrane pass occupies residues 54-74 (VVIMAVSYLLLFLLGTCGNVA). The Cytoplasmic segment spans residues 75–94 (VLTTIYHVIRSSRATLDNTL). The chain crosses the membrane as a helical span at residues 95–115 (IYVIVLSCVDFGVCLSLPITV). Residues 116-132 (IDQILGFWMFGKIPCKL) are Extracellular-facing. The helical transmembrane segment at 133 to 153 (HAVFENFGKILSALILTAMSF) threads the bilayer. Residues 154–171 (DRYAGVCHPQRKRLRSRN) are Cytoplasmic-facing. Residues 172-192 (FAITILLVLAVYAFITLCPLL) traverse the membrane as a helical segment. Over 193–230 (WSFTAREIILYAKETAPGMLTRMKIEKCTVDIDSQMFT) the chain is Extracellular. Residues 231–251 (AFTIYQFILCYCTPLVLIAFF) form a helical membrane-spanning segment. Topologically, residues 252–281 (YTKLLSKLREHTRTFKSSQIPFLHISLYTL) are cytoplasmic. A helical transmembrane segment spans residues 282–302 (AVACFYFLCWTPFWMATLFAV). The Extracellular segment spans residues 303-316 (YLENSANSSSVPPV). A glycan (N-linked (GlcNAc...) asparagine) is linked at N309. A helical transmembrane segment spans residues 317–337 (FVYIMYFIHALPFTNSAINWI). Over 338-436 (LYGALNGQLQ…LLSNHNPTFL (99 aa)) the chain is Cytoplasmic.

Belongs to the G-protein coupled receptor 1 family.

Its subcellular location is the cell membrane. In terms of biological role, putative receptor. The protein is Probable G-protein coupled receptor C06G4.5 of Caenorhabditis elegans.